We begin with the raw amino-acid sequence, 374 residues long: Bifunctional enzyme IspD/IspF (374 aa).

Residues 1–213 form a 2-C-methyl-D-erythritol 4-phosphate cytidylyltransferase region; the sequence is MLDVTLIVLC…PCLKAPSNNF (213 aa). Positions 214–374 are 2-C-methyl-D-erythritol 2,4-cyclodiphosphate synthase; sequence FTGTGFDIHA…TLKYYNWKKR (161 aa). A divalent metal cation is bound by residues Asp220 and His222. Residues 220–222 and 246–247 each bind 4-CDP-2-C-methyl-D-erythritol 2-phosphate; these read DIH and HS. Position 254 (His254) interacts with a divalent metal cation. 4-CDP-2-C-methyl-D-erythritol 2-phosphate contacts are provided by residues 268-270, 273-277, 344-347, Phe351, and Arg354; these read DIG, FPDTD, and TTAE.

In the N-terminal section; belongs to the IspD/TarI cytidylyltransferase family. IspD subfamily. It in the C-terminal section; belongs to the IspF family. A divalent metal cation serves as cofactor.

It carries out the reaction 2-C-methyl-D-erythritol 4-phosphate + CTP + H(+) = 4-CDP-2-C-methyl-D-erythritol + diphosphate. It catalyses the reaction 4-CDP-2-C-methyl-D-erythritol 2-phosphate = 2-C-methyl-D-erythritol 2,4-cyclic diphosphate + CMP. Its pathway is isoprenoid biosynthesis; isopentenyl diphosphate biosynthesis via DXP pathway; isopentenyl diphosphate from 1-deoxy-D-xylulose 5-phosphate: step 2/6. It functions in the pathway isoprenoid biosynthesis; isopentenyl diphosphate biosynthesis via DXP pathway; isopentenyl diphosphate from 1-deoxy-D-xylulose 5-phosphate: step 4/6. Bifunctional enzyme that catalyzes the formation of 4-diphosphocytidyl-2-C-methyl-D-erythritol from CTP and 2-C-methyl-D-erythritol 4-phosphate (MEP) (IspD), and catalyzes the conversion of 4-diphosphocytidyl-2-C-methyl-D-erythritol 2-phosphate (CDP-ME2P) to 2-C-methyl-D-erythritol 2,4-cyclodiphosphate (ME-CPP) with a corresponding release of cytidine 5-monophosphate (CMP) (IspF). The sequence is that of Bifunctional enzyme IspD/IspF from Aliarcobacter butzleri (strain RM4018) (Arcobacter butzleri).